A 239-amino-acid polypeptide reads, in one-letter code: Protein LIFEGUARD 2 (239 aa).

Transmembrane regions (helical) follow at residues 41-61, 66-86, 96-116, 121-141, 156-176, 179-199, and 213-233; these read LLVT…SVFF, AGFA…CPLY, YLLL…TCAF, VILE…LYTF, FLFG…LFPL, ISVM…IVYD, and IWAA…LLTL.

Belongs to the BI1 family. As to expression, expressed in seedlings, roots, leaves, inflorescences and flowers.

It is found in the membrane. Regulates the brassinosteroid (BR) signaling pathway that mediates cell elongation and organ morphogenesis. Its function is as follows. (Microbial infection) Facilitates the development of the powdery mildew fungus E.cruciferarum. In terms of biological role, (Microbial infection) May prevent cell death upon A.alternata f.sp. lycopersici (AAL) toxin treatment. The sequence is that of Protein LIFEGUARD 2 from Arabidopsis thaliana (Mouse-ear cress).